Consider the following 137-residue polypeptide: Large-conductance mechanosensitive channel (137 aa).

The next 2 membrane-spanning stretches (helical) occupy residues 9 to 29 (AFAV…GAAF) and 79 to 99 (IQTV…VKAI).

This sequence belongs to the MscL family. In terms of assembly, homopentamer.

The protein localises to the cell inner membrane. In terms of biological role, channel that opens in response to stretch forces in the membrane lipid bilayer. May participate in the regulation of osmotic pressure changes within the cell. The protein is Large-conductance mechanosensitive channel of Pseudomonas aeruginosa (strain ATCC 15692 / DSM 22644 / CIP 104116 / JCM 14847 / LMG 12228 / 1C / PRS 101 / PAO1).